A 244-amino-acid polypeptide reads, in one-letter code: Orotidine 5'-phosphate decarboxylase (244 aa).

Substrate-binding positions include aspartate 20, lysine 42, 70-79 (DLKFFDIPAT), threonine 125, arginine 186, glutamine 195, glycine 215, and arginine 216. The Proton donor role is filled by lysine 72.

It belongs to the OMP decarboxylase family. Type 1 subfamily. As to quaternary structure, homodimer.

It carries out the reaction orotidine 5'-phosphate + H(+) = UMP + CO2. The protein operates within pyrimidine metabolism; UMP biosynthesis via de novo pathway; UMP from orotate: step 2/2. Functionally, catalyzes the decarboxylation of orotidine 5'-monophosphate (OMP) to uridine 5'-monophosphate (UMP). This is Orotidine 5'-phosphate decarboxylase from Xylella fastidiosa (strain M12).